Consider the following 534-residue polypeptide: Probable cytochrome c oxidase subunit 1 (534 aa).

8 helical membrane-spanning segments follow: residues 35–55 (IMYIIFAIFAGVVGGLFSLLF), 76–96 (VLITVHAIIMVFFMIMPALFS), 97–117 (GFGNYFVPLLIGAPDMAFPRL), 120–140 (ISFWLLIPAFLLLISSTFIDG), 165–185 (VAIFSLHLTGLSSILGSINLI), 202–222 (PLFVWSILVTAFLIILAMPVL), 254–274 (LFWFFGHPEVYIVILPGFGIV), and 286–306 (IFGYQGMVGAMVIIGFVGFIV). Fe(II)-heme a is bound at residue His81. Cu cation contacts are provided by His260 and Tyr264. The 1'-histidyl-3'-tyrosine (His-Tyr) cross-link spans 260 to 264 (HPEVY). 2 residues coordinate Cu cation: His309 and His310. The next 2 membrane-spanning stretches (helical) occupy residues 320-340 (ALIYFTAGTMIIAVPTGIKIF) and 357-377 (MLFAIGFIILFTIGGVTGIIL). Residue His395 coordinates heme a3. Helical transmembrane passes span 396–416 (FHYTMSLGALFTAFAGFYYWF), 433–453 (FWITFIGVNLTFFPQHFLGLA), and 475–495 (IGAGISIFAAFYFVFIVFYTL). Fe(II)-heme a is bound at residue His397.

This sequence belongs to the heme-copper respiratory oxidase family.

The protein localises to the cell membrane. It carries out the reaction 4 Fe(II)-[cytochrome c] + O2 + 8 H(+)(in) = 4 Fe(III)-[cytochrome c] + 2 H2O + 4 H(+)(out). It participates in energy metabolism; oxidative phosphorylation. In terms of biological role, cytochrome c oxidase is the component of the respiratory chain that catalyzes the reduction of oxygen to water. Subunits 1-3 form the functional core of the enzyme complex. CO I is the catalytic subunit of the enzyme. Electrons originating in cytochrome c are transferred via the copper A center of subunit 2 and heme A of subunit 1 to the bimetallic center formed by heme A3 and copper B. The polypeptide is Probable cytochrome c oxidase subunit 1 (ctaD) (Rickettsia prowazekii (strain Madrid E)).